We begin with the raw amino-acid sequence, 486 residues long: UDP-N-acetylmuramate--L-alanine ligase (486 aa).

132–138 contributes to the ATP binding site; that stretch reads GTHGKTT.

The protein belongs to the MurCDEF family.

It localises to the cytoplasm. It carries out the reaction UDP-N-acetyl-alpha-D-muramate + L-alanine + ATP = UDP-N-acetyl-alpha-D-muramoyl-L-alanine + ADP + phosphate + H(+). Its pathway is cell wall biogenesis; peptidoglycan biosynthesis. In terms of biological role, cell wall formation. In Halorhodospira halophila (strain DSM 244 / SL1) (Ectothiorhodospira halophila (strain DSM 244 / SL1)), this protein is UDP-N-acetylmuramate--L-alanine ligase.